A 312-amino-acid polypeptide reads, in one-letter code: Porphobilinogen deaminase (312 aa).

Residue Cys241 is modified to S-(dipyrrolylmethanemethyl)cysteine.

Belongs to the HMBS family. As to quaternary structure, monomer. Dipyrromethane serves as cofactor.

The catalysed reaction is 4 porphobilinogen + H2O = hydroxymethylbilane + 4 NH4(+). The protein operates within porphyrin-containing compound metabolism; protoporphyrin-IX biosynthesis; coproporphyrinogen-III from 5-aminolevulinate: step 2/4. Functionally, tetrapolymerization of the monopyrrole PBG into the hydroxymethylbilane pre-uroporphyrinogen in several discrete steps. The sequence is that of Porphobilinogen deaminase from Trichlorobacter lovleyi (strain ATCC BAA-1151 / DSM 17278 / SZ) (Geobacter lovleyi).